The primary structure comprises 479 residues: Nuclear envelope integral membrane protein 2 (479 aa).

An N-terminal signal peptide occupies residues 1–23; sequence MEKLAAFILVLTLLCAYWQSAEG. A glycan (N-linked (GlcNAc...) asparagine) is linked at N69. Helical transmembrane passes span 172–192, 203–223, 233–253, 276–296, and 301–321; these read LFFY…FLTL, LFLV…QRVL, HWME…AVCY, IVLL…VAVL, and ILPL…SFLA. A glycan (N-linked (GlcNAc...) asparagine) is linked at N414. The tract at residues 414–479 is disordered; the sequence is NSSSSDTQSH…PLDPEDQDFF (66 aa). Positions 438–449 are enriched in low complexity; it reads NSPPVLNNLPSP. Pro residues predominate over residues 450–470; that stretch reads TIYPPTICPYPPVTYTPQPEP.

Belongs to the NEMP family.

The protein resides in the nucleus inner membrane. Contributes to nuclear envelope stiffness in germ cells. Involved in male and female fertility. In Danio rerio (Zebrafish), this protein is Nuclear envelope integral membrane protein 2.